Consider the following 118-residue polypeptide: Large ribosomal subunit protein bL20 (118 aa).

The protein belongs to the bacterial ribosomal protein bL20 family.

Functionally, binds directly to 23S ribosomal RNA and is necessary for the in vitro assembly process of the 50S ribosomal subunit. It is not involved in the protein synthesizing functions of that subunit. The protein is Large ribosomal subunit protein bL20 of Marinomonas sp. (strain MWYL1).